A 613-amino-acid polypeptide reads, in one-letter code: MPKLRSATTTHGRNMAGARALWRATGMTDEDFGKPIIAVVNSFTQFVPGHVHLKDLGQLVAREIEAAGGVAKEFNTIAVDDGIAMGHGGMLYSLPSRELIADSVEYMVNAHCADAMVCISNCDKITPGMLMAALRINIPVIFVSGGPMEAGKTKLSDQIIKLDLVDAMIQGADPKVSDAQSEQVERSACPTCGSCSGMFTANSMNCLTEALGLSQPGNGSMLATHADREQLFKLAGQRIVTLAKRYYQQDDESALPRNIATKAAFENAMALDIAMGGSTNTVLHLLAAAQEAGVDFTMADIDRMSRKVPQLCKVAPSTQKYHMEDVHRAGGVVAILGQLEKAGLVHGDTRTVLGGSLAELLNEYDVSRQPSQEVVDFYRAGPAGIRTTKAFSQDCRWPELDVDRAEGCIRSLEHAYSLEGGLAVLSGNLALDGAIVKTAGVDDEHLCFRGPARVFESQDTAVAGILDGTVKAGEVVVIRYEGPKGGPGMQEMLYPTTYLKSMGLGKQCALITDGRFSGGTSGLSIGHVSPEAASGGTIGLVADGDIININIPARSMVLEVADSVLAARRVAVEARGWKPLDRQRQVSFALRAYAMLATSADKGAVRDRSKLEE.

Asp81 serves as a coordination point for Mg(2+). Cys122 provides a ligand contact to [2Fe-2S] cluster. Residues Asp123 and Lys124 each contribute to the Mg(2+) site. The residue at position 124 (Lys124) is an N6-carboxylysine. A [2Fe-2S] cluster-binding site is contributed by Cys195. Glu491 lines the Mg(2+) pocket. The Proton acceptor role is filled by Ser517.

It belongs to the IlvD/Edd family. As to quaternary structure, homodimer. [2Fe-2S] cluster is required as a cofactor. Requires Mg(2+) as cofactor.

It catalyses the reaction (2R)-2,3-dihydroxy-3-methylbutanoate = 3-methyl-2-oxobutanoate + H2O. The enzyme catalyses (2R,3R)-2,3-dihydroxy-3-methylpentanoate = (S)-3-methyl-2-oxopentanoate + H2O. Its pathway is amino-acid biosynthesis; L-isoleucine biosynthesis; L-isoleucine from 2-oxobutanoate: step 3/4. It participates in amino-acid biosynthesis; L-valine biosynthesis; L-valine from pyruvate: step 3/4. Its function is as follows. Functions in the biosynthesis of branched-chain amino acids. Catalyzes the dehydration of (2R,3R)-2,3-dihydroxy-3-methylpentanoate (2,3-dihydroxy-3-methylvalerate) into 2-oxo-3-methylpentanoate (2-oxo-3-methylvalerate) and of (2R)-2,3-dihydroxy-3-methylbutanoate (2,3-dihydroxyisovalerate) into 2-oxo-3-methylbutanoate (2-oxoisovalerate), the penultimate precursor to L-isoleucine and L-valine, respectively. The chain is Dihydroxy-acid dehydratase from Aeromonas salmonicida (strain A449).